The primary structure comprises 249 residues: MAPSRKFFVGGNWKMNGRKQNLGELIGTLNAAKVPADTEVVCAPPTAYIDFARQKLDPKIAVAAQNCYKVTNGAFTGEISPGMIKDCGATWVVLGHSERRHVFGESDELIGQKVAHALAEGLGVIACIGEKLDEREAGITEKVVFEQTKVIADNVKDWSKVVLAYEPVWAIGTGKTATPQQAQEVHEKLRGWLKSNVSEAVAQSTRIIYGGSVTGATCKELASQPDVDGFLVGGASLKPEFVDIINAKQ.

Substrate-binding residues include asparagine 12 and lysine 14. N6-acetyllysine is present on lysine 14. Tyrosine 68 carries the 3'-nitrotyrosine modification. Position 80 is a phosphoserine (serine 80). Residue histidine 96 is the Electrophile of the active site. Residue serine 106 is modified to Phosphoserine. Lysine 142 is covalently cross-linked (Glycyl lysine isopeptide (Lys-Gly) (interchain with G-Cter in SUMO1)). Residue lysine 149 is modified to N6-succinyllysine. At lysine 156 the chain carries N6-acetyllysine; alternate. Lysine 156 is subject to N6-succinyllysine; alternate. Serine 159 is modified (phosphoserine). Glutamate 166 (proton acceptor) is an active-site residue. The residue at position 173 (threonine 173) is a Phosphothreonine. At lysine 194 the chain carries N6-acetyllysine; alternate. Residue lysine 194 is modified to N6-succinyllysine; alternate. Residue lysine 194 is modified to N6-methyllysine; alternate. At serine 198 the chain carries Phosphoserine. Tyrosine 209 is subject to 3'-nitrotyrosine. Serine 212 carries the post-translational modification Phosphoserine. Threonine 214 bears the Phosphothreonine mark. At serine 223 the chain carries Phosphoserine. An N6-acetyllysine modification is found at lysine 238.

The protein belongs to the triosephosphate isomerase family. Homodimer.

Its subcellular location is the cytoplasm. The catalysed reaction is dihydroxyacetone phosphate = methylglyoxal + phosphate. It catalyses the reaction D-glyceraldehyde 3-phosphate = dihydroxyacetone phosphate. It participates in carbohydrate degradation; glycolysis; D-glyceraldehyde 3-phosphate from glycerone phosphate: step 1/1. It functions in the pathway carbohydrate biosynthesis; gluconeogenesis. Functionally, triosephosphate isomerase is an extremely efficient metabolic enzyme that catalyzes the interconversion between dihydroxyacetone phosphate (DHAP) and D-glyceraldehyde-3-phosphate (G3P) in glycolysis and gluconeogenesis. It is also responsible for the non-negligible production of methylglyoxal a reactive cytotoxic side-product that modifies and can alter proteins, DNA and lipids. This is Triosephosphate isomerase (TPI1) from Macaca fascicularis (Crab-eating macaque).